The sequence spans 673 residues: Fatty acyl-CoA synthetase B (673 aa).

The first 18 residues, Met1–Ala18, serve as a signal peptide directing secretion. Asn267 is a glycosylation site (N-linked (GlcNAc...) asparagine).

Belongs to the ATP-dependent AMP-binding enzyme family.

Its subcellular location is the endoplasmic reticulum. It catalyses the reaction a long-chain fatty acid + ATP + CoA = a long-chain fatty acyl-CoA + AMP + diphosphate. Long chain fatty acid acyl-CoA synthetases catalyze the formation of a thiester bond between a free fatty acid and coenzyme A during fatty acid metabolic process. This is Fatty acyl-CoA synthetase B (fcsB) from Dictyostelium discoideum (Social amoeba).